We begin with the raw amino-acid sequence, 208 residues long: Small ribosomal subunit protein uS4 (208 aa).

The 64-residue stretch at 98–161 (RRLDNVIYRL…KESPRIKELL (64 aa)) folds into the S4 RNA-binding domain.

It belongs to the universal ribosomal protein uS4 family. Part of the 30S ribosomal subunit. Contacts protein S5. The interaction surface between S4 and S5 is involved in control of translational fidelity.

One of the primary rRNA binding proteins, it binds directly to 16S rRNA where it nucleates assembly of the body of the 30S subunit. Its function is as follows. With S5 and S12 plays an important role in translational accuracy. This is Small ribosomal subunit protein uS4 from Pelotomaculum thermopropionicum (strain DSM 13744 / JCM 10971 / SI).